The following is a 430-amino-acid chain: Serine hydroxymethyltransferase 1 (430 aa).

(6S)-5,6,7,8-tetrahydrofolate-binding positions include L132 and G136 to L138. K241 is subject to N6-(pyridoxal phosphate)lysine.

Belongs to the SHMT family. As to quaternary structure, homodimer. Pyridoxal 5'-phosphate is required as a cofactor.

It is found in the cytoplasm. The catalysed reaction is (6R)-5,10-methylene-5,6,7,8-tetrahydrofolate + glycine + H2O = (6S)-5,6,7,8-tetrahydrofolate + L-serine. It functions in the pathway one-carbon metabolism; tetrahydrofolate interconversion. It participates in amino-acid biosynthesis; glycine biosynthesis; glycine from L-serine: step 1/1. Functionally, catalyzes the reversible interconversion of serine and glycine with tetrahydrofolate (THF) serving as the one-carbon carrier. This reaction serves as the major source of one-carbon groups required for the biosynthesis of purines, thymidylate, methionine, and other important biomolecules. Also exhibits THF-independent aldolase activity toward beta-hydroxyamino acids, producing glycine and aldehydes, via a retro-aldol mechanism. In Bordetella parapertussis (strain 12822 / ATCC BAA-587 / NCTC 13253), this protein is Serine hydroxymethyltransferase 1.